Reading from the N-terminus, the 399-residue chain is Subtilisin-like protease CPC735_033790 (399 aa).

Residues 1–20 form the signal peptide; sequence MGFLSSAILLLITAFPAAQA. A propeptide spanning residues 21-117 is cleaved from the precursor; that stretch reads GEMINAAAGA…VEPDRMVNIT (97 aa). The 80-residue stretch at 37–116 folds into the Inhibitor I9 domain; it reads SYIVVMNEGI…YVEPDRMVNI (80 aa). Asn115 carries N-linked (GlcNAc...) asparagine glycosylation. Residues 127–399 enclose the Peptidase S8 domain; it reads SYGLGRISNK…NRLLYNNSGV (273 aa). Active-site charge relay system residues include Asp159 and His190. Asn251 is a glycosylation site (N-linked (GlcNAc...) asparagine). Residue Ser345 is the Charge relay system of the active site. Asn395 carries N-linked (GlcNAc...) asparagine glycosylation.

Belongs to the peptidase S8 family.

It is found in the secreted. Secreted subtilisin-like serine protease with keratinolytic activity that contributes to pathogenicity. This is Subtilisin-like protease CPC735_033790 from Coccidioides posadasii (strain C735) (Valley fever fungus).